Here is a 685-residue protein sequence, read N- to C-terminus: Protein snwA (685 aa).

Disordered regions lie at residues methionine 1–proline 62, arginine 88–valine 112, leucine 347–tyrosine 573, and alanine 605–arginine 685. Composition is skewed to low complexity over residues proline 30–glutamine 41 and lysine 93–methionine 102. Positions alanine 194–glutamine 360 are SNW. Over residues aspartate 370–serine 381 the composition is skewed to acidic residues. Residues arginine 399–serine 494 are compositionally biased toward basic and acidic residues. Acidic residues predominate over residues aspartate 495–aspartate 507. Residues glutamate 508–glutamate 556 show a composition bias toward basic and acidic residues. The segment covering glutamate 618–arginine 631 has biased composition (polar residues). Basic and acidic residues predominate over residues proline 646 to arginine 685.

The protein belongs to the SNW family. Interacts with cypE.

The protein localises to the nucleus. This chain is Protein snwA (snwA), found in Dictyostelium discoideum (Social amoeba).